A 348-amino-acid polypeptide reads, in one-letter code: Rhodopsin (348 aa).

M1 bears the N-acetylmethionine mark. Residues 1 to 36 (MNGTEGPNFYVPFSNATGVVRSPFEYPQYYLAEPWQ) are Extracellular-facing. 2 N-linked (GlcNAc...) asparagine glycosylation sites follow: N2 and N15. The helical transmembrane segment at 37-61 (FSMLAAYMFLLIVLGFPINFLTLYV) threads the bilayer. Over 62–73 (TVQHKKLRTPLN) the chain is Cytoplasmic. A helical transmembrane segment spans residues 74–96 (YILLNLAVADLFMVFGGFTTTLY). Residues 97–110 (TSLHGYFVFGPTGC) lie on the Extracellular side of the membrane. A disulfide bridge links C110 with C187. The helical transmembrane segment at 111 to 133 (NAEGFFATLGGEIALWSLVVLAI) threads the bilayer. The 'Ionic lock' involved in activated form stabilization motif lies at 134–136 (ERY). At 134–152 (ERYVVVCKPMSNFRFGENH) the chain is on the cytoplasmic side. A helical transmembrane segment spans residues 153–173 (AIMGVAFTWVMALACAAPPLF). Residues 174–202 (GWSRYIPEGLQCSCGIDYYTLKPEVNNES) are Extracellular-facing. E201 contacts Zn(2+). A helical membrane pass occupies residues 203 to 224 (FVIYMFVVHFTIPMIVIFFCYG). Residues 225–252 (QLVFTVKEARAQQQESATTQKAEKEVTR) lie on the Cytoplasmic side of the membrane. The helical transmembrane segment at 253 to 274 (MVIIMVIAFLICWVPYASVAFY) threads the bilayer. Residues 275–286 (IFTHQGSNFGPI) are Extracellular-facing. Residue Q279 coordinates Zn(2+). The chain crosses the membrane as a helical span at residues 287–308 (FMTIPAFFAKSASIYNPVIYIM). K296 is modified (N6-(retinylidene)lysine). The Cytoplasmic portion of the chain corresponds to 309–348 (MNKQFRNCMLTTICCGKNPLGDDEASATVSKTETSQVAPA). S-palmitoyl cysteine attachment occurs at residues C322 and C323. Positions 330-348 (DDEASATVSKTETSQVAPA) are interaction with SAG. Residue S334 is modified to Phosphoserine. A Phosphothreonine modification is found at T336. S338 is subject to Phosphoserine. A phosphothreonine mark is found at T340 and T342. S343 bears the Phosphoserine mark.

This sequence belongs to the G-protein coupled receptor 1 family. Opsin subfamily. In terms of assembly, homodimer. May form a complex composed of RHO, GRK1 and RCVRN in a Ca(2+)-dependent manner; RCVRN prevents the interaction between GRK1 and RHO. Interacts with GRK1. Interacts (phosphorylated form) with SAG. Interacts with GNAT1. Interacts with GNAT3. SAG and G-proteins compete for a common binding site. Interacts with PRCD; the interaction promotes PRCD stability. Forms a complex with ASAP1 and ARF4. Forms a complex with ASAP1, RAB11A, Rabin8/RAB3IP, ARF4 and RAB11FIP3; the complex regulates Golgi-to-cilia rhodopsin/RHO transport in photoreceptors. Post-translationally, phosphorylated on some or all of the serine and threonine residues present in the C-terminal region. Contains one covalently linked retinal chromophore. Upon light absorption, the covalently bound 11-cis-retinal is converted to all-trans-retinal. After hydrolysis of the Schiff base and release of the covalently bound all-trans-retinal, active rhodopsin is regenerated by binding of a fresh molecule of 11-cis-retinal.

The protein localises to the membrane. The protein resides in the cell projection. Its subcellular location is the cilium. It localises to the photoreceptor outer segment. In terms of biological role, photoreceptor required for image-forming vision at low light intensity. Required for photoreceptor cell viability after birth. Light-induced isomerization of 11-cis to all-trans retinal triggers a conformational change that activates signaling via G-proteins. Subsequent receptor phosphorylation mediates displacement of the bound G-protein alpha subunit by the arrestin SAG and terminates signaling. In Macaca fascicularis (Crab-eating macaque), this protein is Rhodopsin (RHO).